The sequence spans 404 residues: MTKPSNDEPPLTNVRDLEAMLPLEEEDLTADSQDLEYTAVAHRQQFSTDLVRLYLQDIGRIPLLKRDEEVHIAQQVQSYLRLVEIQNRAAESDAAIDQYQTAIAVHDQLLVQLGHRPSYERWAKILGQTVATLKQTLKSGKKRWAELAGLTVEELENIEKQGITAKAHMIKANLRLVVSVAKKYQNRGLELLDLIQEGTLGLERAVEKFDPTKGYRFSTYSYWWIRQGITRAIATQSRMIRLPVHITEKLNKIKRAQRKISQEKGHTPKIDEVAEELGMTPEQVREVLTQVPRSVSLELKVGQDKDTELMDLLETDTQSPEDELMREALQNDMQEILLDLTPREQEVIALRFGFQDGVAHSLSEIGRILNLSRERVRQIEAKALQKLRHPRRRDRIRDYYENLG.

A Polymerase core binding motif is present at residues 193 to 206 (DLIQEGTLGLERAV). The segment at residues 362 to 381 (LSEIGRILNLSRERVRQIEA) is a DNA-binding region (H-T-H motif).

Belongs to the sigma-70 factor family.

Sigma factors are initiation factors that promote the attachment of RNA polymerase to specific initiation sites and are then released. This Synechocystis sp. (strain ATCC 27184 / PCC 6803 / Kazusa) protein is Probable RNA polymerase sigma-C factor (sigC).